Consider the following 282-residue polypeptide: Bifunctional protein FolD 2 (282 aa).

NADP(+) contacts are provided by residues 165–167 and Ser-190; that span reads GRS.

This sequence belongs to the tetrahydrofolate dehydrogenase/cyclohydrolase family. Homodimer.

It carries out the reaction (6R)-5,10-methylene-5,6,7,8-tetrahydrofolate + NADP(+) = (6R)-5,10-methenyltetrahydrofolate + NADPH. It catalyses the reaction (6R)-5,10-methenyltetrahydrofolate + H2O = (6R)-10-formyltetrahydrofolate + H(+). It functions in the pathway one-carbon metabolism; tetrahydrofolate interconversion. Its function is as follows. Catalyzes the oxidation of 5,10-methylenetetrahydrofolate to 5,10-methenyltetrahydrofolate and then the hydrolysis of 5,10-methenyltetrahydrofolate to 10-formyltetrahydrofolate. The sequence is that of Bifunctional protein FolD 2 from Acinetobacter baylyi (strain ATCC 33305 / BD413 / ADP1).